Reading from the N-terminus, the 413-residue chain is Serine hydroxymethyltransferase (413 aa).

Residues leucine 117 and 121-123 (GHL) contribute to the (6S)-5,6,7,8-tetrahydrofolate site. Lysine 226 bears the N6-(pyridoxal phosphate)lysine mark. (6S)-5,6,7,8-tetrahydrofolate is bound at residue 349-351 (SPF).

This sequence belongs to the SHMT family. Homodimer. The cofactor is pyridoxal 5'-phosphate.

The protein localises to the cytoplasm. The catalysed reaction is (6R)-5,10-methylene-5,6,7,8-tetrahydrofolate + glycine + H2O = (6S)-5,6,7,8-tetrahydrofolate + L-serine. Its pathway is one-carbon metabolism; tetrahydrofolate interconversion. It participates in amino-acid biosynthesis; glycine biosynthesis; glycine from L-serine: step 1/1. Its function is as follows. Catalyzes the reversible interconversion of serine and glycine with tetrahydrofolate (THF) serving as the one-carbon carrier. This reaction serves as the major source of one-carbon groups required for the biosynthesis of purines, thymidylate, methionine, and other important biomolecules. Also exhibits THF-independent aldolase activity toward beta-hydroxyamino acids, producing glycine and aldehydes, via a retro-aldol mechanism. The chain is Serine hydroxymethyltransferase from Listeria innocua serovar 6a (strain ATCC BAA-680 / CLIP 11262).